Consider the following 139-residue polypeptide: Large ribosomal subunit protein uL16 (139 aa).

It belongs to the universal ribosomal protein uL16 family. Part of the 50S ribosomal subunit.

Its function is as follows. Binds 23S rRNA and is also seen to make contacts with the A and possibly P site tRNAs. The protein is Large ribosomal subunit protein uL16 of Synechocystis sp. (strain ATCC 27184 / PCC 6803 / Kazusa).